The primary structure comprises 286 residues: Phosphatidylserine decarboxylase proenzyme (286 aa).

Active-site charge relay system; for autoendoproteolytic cleavage activity residues include aspartate 88, histidine 145, and serine 251. Serine 251 acts as the Schiff-base intermediate with substrate; via pyruvic acid; for decarboxylase activity in catalysis. At serine 251 the chain carries Pyruvic acid (Ser); by autocatalysis.

This sequence belongs to the phosphatidylserine decarboxylase family. PSD-B subfamily. Prokaryotic type I sub-subfamily. As to quaternary structure, heterodimer of a large membrane-associated beta subunit and a small pyruvoyl-containing alpha subunit. It depends on pyruvate as a cofactor. Is synthesized initially as an inactive proenzyme. Formation of the active enzyme involves a self-maturation process in which the active site pyruvoyl group is generated from an internal serine residue via an autocatalytic post-translational modification. Two non-identical subunits are generated from the proenzyme in this reaction, and the pyruvate is formed at the N-terminus of the alpha chain, which is derived from the carboxyl end of the proenzyme. The autoendoproteolytic cleavage occurs by a canonical serine protease mechanism, in which the side chain hydroxyl group of the serine supplies its oxygen atom to form the C-terminus of the beta chain, while the remainder of the serine residue undergoes an oxidative deamination to produce ammonia and the pyruvoyl prosthetic group on the alpha chain. During this reaction, the Ser that is part of the protease active site of the proenzyme becomes the pyruvoyl prosthetic group, which constitutes an essential element of the active site of the mature decarboxylase.

Its subcellular location is the cell membrane. The enzyme catalyses a 1,2-diacyl-sn-glycero-3-phospho-L-serine + H(+) = a 1,2-diacyl-sn-glycero-3-phosphoethanolamine + CO2. Its pathway is phospholipid metabolism; phosphatidylethanolamine biosynthesis; phosphatidylethanolamine from CDP-diacylglycerol: step 2/2. In terms of biological role, catalyzes the formation of phosphatidylethanolamine (PtdEtn) from phosphatidylserine (PtdSer). This is Phosphatidylserine decarboxylase proenzyme from Verminephrobacter eiseniae (strain EF01-2).